A 556-amino-acid chain; its full sequence is Phospholipase D (556 aa).

Residues 1 to 47 (MTSDQRPARLPTHKGKLLAPHRLHRLIPVSVALTTVCAALPSSTAYA) form the signal peptide. The PLD phosphodiesterase 1 domain occupies 210 to 237 (SLSWNHSKLLVVDGKTAITGGINGWKDD). The tract at residues 326–360 (SDPSSGYHPDLPTAPDTKCTVGLHDNTNADRDYDT) is disordered. The region spanning 484 to 511 (KPYALHHKLVSVDDSAFYIGSKNLYPAW) is the PLD phosphodiesterase 2 domain.

The protein belongs to the phospholipase D family. Probably has at least 1 disulfide bond.

It localises to the secreted. It catalyses the reaction a 1,2-diacyl-sn-glycero-3-phosphocholine + H2O = a 1,2-diacyl-sn-glycero-3-phosphate + choline + H(+). Inhibited by mercaptoethanol and dithiothreitol. In terms of biological role, a reversible phospholipase active on phosphatidylcholine (PC) and phosphatidylethanolamine. Lysophosphatidylcholine and egg sphingomyelin are hydrolyzed about 50 times and 100 times more slowly than PC, respectively. During the transphosphatidylation reaction straight-chain hydroxy compounds, such as triethyleneglycol and triethyleneglycol monomethyl ether, were phosphatidylated in good yield, as were monosaccharides. Disaccharides and sugar alcohol reacted slowly, while N-acetyl-D-galactosamine, D-galactosamine and D-galacturonic acid were not phosphatidylated. This is Phospholipase D from Streptomyces antibioticus.